The primary structure comprises 477 residues: Probable periplasmic serine endoprotease DegP-like (477 aa).

The N-terminal stretch at 1 to 27 is a signal peptide; that stretch reads MSIPRLKSYLMMFAAVLMLGQVLTAQA. Active-site charge relay system residues include H117, D147, and S220. Substrate-binding positions include 218 to 220 and 275 to 279; these read GNS and LGVVI. 2 consecutive PDZ domains span residues 264 to 355 and 361 to 466; these read LKKD…IRNG and DISV…LRQG.

This sequence belongs to the peptidase S1C family.

Its subcellular location is the periplasm. The catalysed reaction is Acts on substrates that are at least partially unfolded. The cleavage site P1 residue is normally between a pair of hydrophobic residues, such as Val-|-Val.. Functionally, might be efficient in the degradation of transiently denatured and unfolded proteins which accumulate in the periplasm following stress conditions. The chain is Probable periplasmic serine endoprotease DegP-like from Pseudomonas putida (strain ATCC 700007 / DSM 6899 / JCM 31910 / BCRC 17059 / LMG 24140 / F1).